Reading from the N-terminus, the 368-residue chain is Queuine tRNA-ribosyltransferase (368 aa).

The active-site Proton acceptor is the Asp89. Substrate is bound by residues 89–93, Asp143, Gln187, and Gly214; that span reads DSGGF. Asp264 acts as the Nucleophile in catalysis. Residues 269-273 are RNA binding; important for wobble base 34 recognition; the sequence is TRNAR. Residues Cys302, Cys304, Cys307, and His333 each contribute to the Zn(2+) site.

This sequence belongs to the queuine tRNA-ribosyltransferase family. Homodimer. Within each dimer, one monomer is responsible for RNA recognition and catalysis, while the other monomer binds to the replacement base PreQ1. Zn(2+) is required as a cofactor.

The enzyme catalyses 7-aminomethyl-7-carbaguanine + guanosine(34) in tRNA = 7-aminomethyl-7-carbaguanosine(34) in tRNA + guanine. The protein operates within tRNA modification; tRNA-queuosine biosynthesis. In terms of biological role, catalyzes the base-exchange of a guanine (G) residue with the queuine precursor 7-aminomethyl-7-deazaguanine (PreQ1) at position 34 (anticodon wobble position) in tRNAs with GU(N) anticodons (tRNA-Asp, -Asn, -His and -Tyr). Catalysis occurs through a double-displacement mechanism. The nucleophile active site attacks the C1' of nucleotide 34 to detach the guanine base from the RNA, forming a covalent enzyme-RNA intermediate. The proton acceptor active site deprotonates the incoming PreQ1, allowing a nucleophilic attack on the C1' of the ribose to form the product. After dissociation, two additional enzymatic reactions on the tRNA convert PreQ1 to queuine (Q), resulting in the hypermodified nucleoside queuosine (7-(((4,5-cis-dihydroxy-2-cyclopenten-1-yl)amino)methyl)-7-deazaguanosine). This Blochmanniella pennsylvanica (strain BPEN) protein is Queuine tRNA-ribosyltransferase.